A 235-amino-acid chain; its full sequence is Purine nucleoside phosphorylase DeoD-type (235 aa).

H4 serves as a coordination point for a purine D-ribonucleoside. Phosphate contacts are provided by residues G20, R24, R43, and 87 to 90; that span reads RVGT. Residues E162, 179–181, and 203–204 each bind a purine D-ribonucleoside; these read EME and SD. D204 serves as the catalytic Proton donor.

This sequence belongs to the PNP/UDP phosphorylase family. In terms of assembly, homohexamer; trimer of homodimers.

The enzyme catalyses a purine D-ribonucleoside + phosphate = a purine nucleobase + alpha-D-ribose 1-phosphate. It catalyses the reaction a purine 2'-deoxy-D-ribonucleoside + phosphate = a purine nucleobase + 2-deoxy-alpha-D-ribose 1-phosphate. In terms of biological role, catalyzes the reversible phosphorolytic breakdown of the N-glycosidic bond in the beta-(deoxy)ribonucleoside molecules, with the formation of the corresponding free purine bases and pentose-1-phosphate. In Bacillus cereus (strain ZK / E33L), this protein is Purine nucleoside phosphorylase DeoD-type.